The chain runs to 597 residues: Sodium/mannose cotransporter SLC5A10 (597 aa).

The Extracellular segment spans residues 1–16 (MAVDNSTSDAHTPGRQ). N-linked (GlcNAc...) asparagine glycosylation is present at Asn-5. A helical transmembrane segment spans residues 17–37 (LTVVDIAIIAVYFALNVAVGI). Residues 38–73 (WSSCRASRNTVRGYFLAGRDMTWWPIGASLFASSEG) lie on the Cytoplasmic side of the membrane. Residues 74–94 (SGLFIGLAGSGAAGGLAVAGF) traverse the membrane as a helical segment. The Extracellular portion of the chain corresponds to 95 to 100 (EWNATY). The N-linked (GlcNAc...) asparagine glycan is linked to Asn-97. The helical transmembrane segment at 101–121 (VLLALAWVFVPIYLSSEIVTM) threads the bilayer. The Cytoplasmic portion of the chain corresponds to 122 to 139 (PEYMQKRYGGQRIRMYLS). Residues 140-162 (VLSLLLSVFTKISIDLYAGALFV) form a helical membrane-spanning segment. At 163-174 (HICLGWNFYLST) the chain is on the extracellular side. The helical transmembrane segment at 175-195 (VIMLAITALYTIAGGLTAVIY) threads the bilayer. Residues 196-201 (TDALQT) are Cytoplasmic-facing. Residues 202-222 (LVMVAGAVILTIKAFEQIGGY) traverse the membrane as a helical segment. The Extracellular segment spans residues 223 to 265 (EQLAEAYAQAVPSRTISNTTCHVPRADAMHMFRDPYTADLPWT). The chain crosses the membrane as a helical span at residues 266–286 (GMTFGLTIMAAWYWCTDQVIV). Residues 287–301 (QRSLSARDLNHAKGG) lie on the Cytoplasmic side of the membrane. Residues 302–322 (SILASYLKMLPMGLMVMPGMI) traverse the membrane as a helical segment. The Extracellular portion of the chain corresponds to 323–367 (SRVLFPDDVGCVVPAECLRACGAEIGCSNIAYPKLVMELMPTGLR). Residues 368 to 388 (GLMVAVMMAALMSSLTSIFNS) traverse the membrane as a helical segment. The Cytoplasmic portion of the chain corresponds to 389-410 (SSTLFTMDIWRRLRPRAGEREL). Residues 411-431 (LLVGRLVIVVLVGVSVAWIPV) form a helical membrane-spanning segment. Residues 432-444 (LQGSNGGQLFIYM) are Extracellular-facing. The helical transmembrane segment at 445-465 (QSVTSSLAPPVTAVFVLGIFW) threads the bilayer. Over 466 to 472 (RRANEQG) the chain is Cytoplasmic. A helical membrane pass occupies residues 473–493 (AFWGLMAGLAVGATRLVLEFL). The Extracellular segment spans residues 494 to 514 (HPAPPCGHPDTRPPILHGVHY). The chain crosses the membrane as a helical span at residues 515-535 (LHFAVALFLLSGAVVVAGSLL). Residues 536-576 (TPHPQGVQIQSLTWWTLAQDLPLGVKTGDGRASQRHAFWAR) lie on the Cytoplasmic side of the membrane. The chain crosses the membrane as a helical span at residues 577–597 (VCGVNAILLMCVNIFFYTYFA).

This sequence belongs to the sodium:solute symporter (SSF) (TC 2.A.21) family. Predominantyl expressed in kidney. Also detected at very low levels in testes, skeletal muscle, and spleen.

It is found in the apical cell membrane. It carries out the reaction D-mannose(out) + Na(+)(out) = D-mannose(in) + Na(+)(in). It catalyses the reaction D-fructopyranose(out) + Na(+)(out) = D-fructopyranose(in) + Na(+)(in). Electrogenic Na+-coupled sugar symporter that actively transports D-mannose or D-fructose at the plasma membrane, with a Na+ to sugar coupling ratio of 1:1. Transporter activity is driven by a transmembrane Na+ electrochemical gradient set by the Na+/K+ pump. Exclusively recognizes sugar substrates having a pyranose ring with an axial hydroxyl group on carbon 2. Has likely evolved to enable renal reabsorption of D-mannose, an important constituent of oligosaccharide chains of glycoproteins. Contributes to dietary D-fructose reabsorption from glomerular filtrate across the brush border of the kidney. In Bos taurus (Bovine), this protein is Sodium/mannose cotransporter SLC5A10 (SLC5A10).